The sequence spans 379 residues: Multicilin (379 aa).

Disordered regions lie at residues 26–46 (SRRS…PWKS) and 87–106 (LLGT…NPSL). Residues 175-223 (EQYWKEVADQNQRALGTALIENNQLHVTLTQKQEEIASLRERNVQLKEL) adopt a coiled-coil conformation. The span at 289–309 (LQNRDPKRPRLQQEPDSKDCS) shows a compositional bias: basic and acidic residues. The tract at residues 289–311 (LQNRDPKRPRLQQEPDSKDCSTR) is disordered.

The protein belongs to the geminin family. In terms of assembly, heterodimer (via coiled-coil domain) with GMNN (via coiled-coil domain); targets GMNN to the nucleus. Can form homodimers (in vitro, via coiled-coil domain), but these are much less stable than the heterodimer formed with GMNN.

It is found in the nucleus. In terms of biological role, transcription regulator specifically required for multiciliate cell differentiation. Acts in a multiprotein complex containing E2F4 and E2F5 that binds and activates genes required for centriole biogenesis. Required for the deuterosome-mediated acentriolar pathway. Plays a role in mitotic cell cycle progression by promoting cell cycle exit. Modulates GMNN activity by reducing its affinity for CDT1. In Rattus norvegicus (Rat), this protein is Multicilin (Mcidas).